The primary structure comprises 476 residues: MSAVLKSPADSAIADISLADWGRKEIRIAETEMPGLMAIREEFAAKQPLKGARITGSLHMTIQTAVLIETLKALGADVRWASCNIFSTQDHAAAAIAATGTPVFAIKGETLVDYWDYTHRIFDFGPKGSEGEGPNMILDDGGDATLLMHLGKRAEKDASVLAHPGSEEERILFAAIKAKLAEDSTWYSRKSAQIIGVTEETTTGVHRLKEMSAKGTLLFRAINVNDSVTKSKFDNLYGCRESLVDGIKRATDVMIAGKVAVVAGYGDVGKGSAQALRALSAQVWVTEIDPINALQAAMEGFKVVTMEWAADKADIFVTTTGNRDVITFEHMKAMKDQAIVCNIGHFDNEIQVAKLEEHCQWEEIKPQVDHVIFPDGKRIILLAKGRLVNLGCGTGHPSFVMSNSFANQTIAQIELFTHPEGYDVGKVYVLPKHLDEKVARLHLKKVGAMLTELSDEQAAYIGVPKQGPYKPDTYRY.

The substrate site is built by threonine 61, aspartate 140, and glutamate 200. 201–203 (TTT) contributes to the NAD(+) binding site. Residues lysine 230 and aspartate 234 each contribute to the substrate site. Residues asparagine 235, 264–269 (GYGDVG), glutamate 287, asparagine 322, 343–345 (IGH), and asparagine 389 contribute to the NAD(+) site.

It belongs to the adenosylhomocysteinase family. The cofactor is NAD(+).

Its subcellular location is the cytoplasm. The enzyme catalyses S-adenosyl-L-homocysteine + H2O = L-homocysteine + adenosine. It participates in amino-acid biosynthesis; L-homocysteine biosynthesis; L-homocysteine from S-adenosyl-L-homocysteine: step 1/1. In terms of biological role, may play a key role in the regulation of the intracellular concentration of adenosylhomocysteine. The chain is Adenosylhomocysteinase from Acidovorax sp. (strain JS42).